Here is a 472-residue protein sequence, read N- to C-terminus: Hepatocyte nuclear factor 3-alpha (472 aa).

A DNA-binding region (fork-head) is located at residues 169-260 (AKPPYSYISL…GNMFENGCYL (92 aa)). The disordered stretch occupies residues 269–392 (EKQPGAGGGG…ESQLHLKGDP (124 aa)). Residues 273–289 (GAGGGGGSGSGGSGAKG) are compositionally biased toward gly residues. A phosphoserine mark is found at serine 307 and serine 331. 2 stretches are compositionally biased toward low complexity: residues 322–332 (GAPAPGPAASP) and 351–366 (TPASSTAPPISSGPGA).

As to quaternary structure, binds DNA as a monomer. Interacts with FOXA2. Interacts with NKX2-1. Interacts with HDAC7. Interacts with the histone H3-H4 heterodimer. Associates with nucleosomes containing histone H2A. Interacts with AR. Interacts with NR0B2. In terms of tissue distribution, highly expressed in prostate and ESR1-positive breast tumors. Overexpressed in esophageal and lung adenocarcinomas.

The protein localises to the nucleus. Its function is as follows. Transcription factor that is involved in embryonic development, establishment of tissue-specific gene expression and regulation of gene expression in differentiated tissues. Is thought to act as a 'pioneer' factor opening the compacted chromatin for other proteins through interactions with nucleosomal core histones and thereby replacing linker histones at target enhancer and/or promoter sites. Binds DNA with the consensus sequence 5'-[AC]A[AT]T[AG]TT[GT][AG][CT]T[CT]-3'. Proposed to play a role in translating the epigenetic signatures into cell type-specific enhancer-driven transcriptional programs. Its differential recruitment to chromatin is dependent on distribution of histone H3 methylated at 'Lys-5' (H3K4me2) in estrogen-regulated genes. Involved in the development of multiple endoderm-derived organ systems such as liver, pancreas, lung and prostate; FOXA1 and FOXA2 seem to have at least in part redundant roles. Modulates the transcriptional activity of nuclear hormone receptors. Is involved in ESR1-mediated transcription; required for ESR1 binding to the NKX2-1 promoter in breast cancer cells; binds to the RPRM promoter and is required for the estrogen-induced repression of RPRM. Involved in regulation of apoptosis by inhibiting the expression of BCL2. Involved in cell cycle regulation by activating expression of CDKN1B, alone or in conjunction with BRCA1. Originally described as a transcription activator for a number of liver genes such as AFP, albumin, tyrosine aminotransferase, PEPCK, etc. Interacts with the cis-acting regulatory regions of these genes. Involved in glucose homeostasis. In Homo sapiens (Human), this protein is Hepatocyte nuclear factor 3-alpha (FOXA1).